The primary structure comprises 95 residues: Small ribosomal subunit protein bS6 (95 aa).

This sequence belongs to the bacterial ribosomal protein bS6 family.

Functionally, binds together with bS18 to 16S ribosomal RNA. The chain is Small ribosomal subunit protein bS6 from Nocardia farcinica (strain IFM 10152).